A 615-amino-acid chain; its full sequence is UvrABC system protein C (615 aa).

The 80-residue stretch at 12-91 (EKPGVYIMKD…IKKYKPKYNV (80 aa)) folds into the GIY-YIG domain. The region spanning 203–238 (DWLIQKLKEDMKKAAEELRFEEAARIRDQIFAIERT) is the UVR domain.

This sequence belongs to the UvrC family. As to quaternary structure, interacts with UvrB in an incision complex.

The protein localises to the cytoplasm. The UvrABC repair system catalyzes the recognition and processing of DNA lesions. UvrC both incises the 5' and 3' sides of the lesion. The N-terminal half is responsible for the 3' incision and the C-terminal half is responsible for the 5' incision. The polypeptide is UvrABC system protein C (Thermoanaerobacter pseudethanolicus (strain ATCC 33223 / 39E) (Clostridium thermohydrosulfuricum)).